Consider the following 249-residue polypeptide: Putative type I specificity subunit S.MpnORF615P (249 aa).

It belongs to the type-I restriction system S methylase family. In terms of assembly, the methyltransferase is composed of M and S polypeptides.

The specificity (S) subunit of a type I methyltransferase (MTase); this subunit dictates DNA sequence specificity. The single R subunit has multiple frameshifts and is probably not expressed. This Mycoplasma pneumoniae (strain ATCC 29342 / M129 / Subtype 1) (Mycoplasmoides pneumoniae) protein is Putative type I specificity subunit S.MpnORF615P.